The sequence spans 301 residues: GTPase Era (301 aa).

The region spanning 7–175 (YCGFVAIVGR…AAIVRKHLPE (169 aa)) is the Era-type G domain. The interval 15 to 22 (GRPNVGKS) is G1. A GTP-binding site is contributed by 15-22 (GRPNVGKS). The segment at 41–45 (QTTRH) is G2. Residues 62-65 (DTPG) are G3. GTP contacts are provided by residues 62 to 66 (DTPGL) and 124 to 127 (NKVD). Residues 124–127 (NKVD) form a G4 region. Residues 154–156 (ISA) are G5. The KH type-2 domain occupies 206–283 (LGAELPYSVT…HLELWVKVKS (78 aa)).

Belongs to the TRAFAC class TrmE-Era-EngA-EngB-Septin-like GTPase superfamily. Era GTPase family. In terms of assembly, monomer.

It is found in the cytoplasm. The protein localises to the cell inner membrane. Functionally, an essential GTPase that binds both GDP and GTP, with rapid nucleotide exchange. Plays a role in 16S rRNA processing and 30S ribosomal subunit biogenesis and possibly also in cell cycle regulation and energy metabolism. This chain is GTPase Era, found in Klebsiella pneumoniae subsp. pneumoniae (strain ATCC 700721 / MGH 78578).